Here is a 282-residue protein sequence, read N- to C-terminus: Undecaprenyl-diphosphatase (282 aa).

A run of 6 helical transmembrane segments spans residues 90–110 (YWLG…GLVC), 121–141 (LWVV…AEYV), 165–185 (LALI…LFLG), 194–214 (FGFL…IPDA), 228–248 (QLLV…SWLL), and 256–276 (LYWF…LLAV).

Belongs to the UppP family.

The protein resides in the cell membrane. It catalyses the reaction di-trans,octa-cis-undecaprenyl diphosphate + H2O = di-trans,octa-cis-undecaprenyl phosphate + phosphate + H(+). Catalyzes the dephosphorylation of undecaprenyl diphosphate (UPP). Confers resistance to bacitracin. This chain is Undecaprenyl-diphosphatase, found in Mycobacterium leprae (strain Br4923).